Here is a 350-residue protein sequence, read N- to C-terminus: Protein-glutamate methylesterase/protein-glutamine glutaminase 1 (350 aa).

Residues 3 to 121 (KVLIVEDSPV…RDYDIRARDL (119 aa)) form the Response regulatory domain. Aspartate 54 carries the post-translational modification 4-aspartylphosphate. The CheB-type methylesterase domain occupies 148–342 (PASGEPDIGK…PPEKIARVLV (195 aa)). Residues serine 170, histidine 197, and aspartate 290 contribute to the active site.

This sequence belongs to the CheB family. Post-translationally, phosphorylated by CheA. Phosphorylation of the N-terminal regulatory domain activates the methylesterase activity.

It localises to the cytoplasm. The catalysed reaction is [protein]-L-glutamate 5-O-methyl ester + H2O = L-glutamyl-[protein] + methanol + H(+). It carries out the reaction L-glutaminyl-[protein] + H2O = L-glutamyl-[protein] + NH4(+). Involved in chemotaxis. Part of a chemotaxis signal transduction system that modulates chemotaxis in response to various stimuli. Catalyzes the demethylation of specific methylglutamate residues introduced into the chemoreceptors (methyl-accepting chemotaxis proteins or MCP) by CheR. Also mediates the irreversible deamidation of specific glutamine residues to glutamic acid. This chain is Protein-glutamate methylesterase/protein-glutamine glutaminase 1, found in Syntrophus aciditrophicus (strain SB).